We begin with the raw amino-acid sequence, 529 residues long: Peptide chain release factor 3 (529 aa).

The region spanning 11 to 280 is the tr-type G domain; that stretch reads AKRRTFAIIS…GLVEWAPAPM (270 aa). Residues 20 to 27, 88 to 92, and 142 to 145 each bind GTP; these read SHPDAGKT, DTPGH, and NKLD.

This sequence belongs to the TRAFAC class translation factor GTPase superfamily. Classic translation factor GTPase family. PrfC subfamily.

It localises to the cytoplasm. Its function is as follows. Increases the formation of ribosomal termination complexes and stimulates activities of RF-1 and RF-2. It binds guanine nucleotides and has strong preference for UGA stop codons. It may interact directly with the ribosome. The stimulation of RF-1 and RF-2 is significantly reduced by GTP and GDP, but not by GMP. The protein is Peptide chain release factor 3 of Shigella dysenteriae serotype 1 (strain Sd197).